Reading from the N-terminus, the 360-residue chain is Zinc metalloproteinase nas-5 (360 aa).

The N-terminal stretch at Met1–Gly21 is a signal peptide. The Peptidase M12A domain maps to Asn61–Ser269. Asn108 carries an N-linked (GlcNAc...) asparagine glycan. Cystine bridges form between Cys111–Cys268 and Cys134–Cys157. Zn(2+) is bound at residue His165. The active site involves Glu166. Zn(2+) contacts are provided by His169 and His175. Positions Gln299–Thr336 constitute a PLAC domain.

Requires Zn(2+) as cofactor.

It localises to the secreted. Metalloprotease. The chain is Zinc metalloproteinase nas-5 (nas-5) from Caenorhabditis elegans.